We begin with the raw amino-acid sequence, 180 residues long: UPF0340 protein LL0489 (180 aa).

Belongs to the UPF0340 family.

The polypeptide is UPF0340 protein LL0489 (yeiF) (Lactococcus lactis subsp. lactis (strain IL1403) (Streptococcus lactis)).